A 67-amino-acid polypeptide reads, in one-letter code: Large ribosomal subunit protein uL29 (67 aa).

The protein belongs to the universal ribosomal protein uL29 family.

The chain is Large ribosomal subunit protein uL29 from Sorangium cellulosum (strain So ce56) (Polyangium cellulosum (strain So ce56)).